A 333-amino-acid polypeptide reads, in one-letter code: Ornithine carbamoyltransferase (333 aa).

Residues 56–59 (STRT), Q83, R107, and 134–137 (HPTQ) each bind carbamoyl phosphate. L-ornithine-binding positions include N167, D231, and 235–236 (SM). Residues 273-274 (CL) and R318 contribute to the carbamoyl phosphate site.

The protein belongs to the aspartate/ornithine carbamoyltransferase superfamily. OTCase family.

The protein resides in the cytoplasm. The catalysed reaction is carbamoyl phosphate + L-ornithine = L-citrulline + phosphate + H(+). Its pathway is amino-acid biosynthesis; L-arginine biosynthesis; L-arginine from L-ornithine and carbamoyl phosphate: step 1/3. Functionally, reversibly catalyzes the transfer of the carbamoyl group from carbamoyl phosphate (CP) to the N(epsilon) atom of ornithine (ORN) to produce L-citrulline. This Staphylococcus aureus (strain MSSA476) protein is Ornithine carbamoyltransferase.